Here is a 188-residue protein sequence, read N- to C-terminus: Elongation factor P (188 aa).

This sequence belongs to the elongation factor P family.

It is found in the cytoplasm. Its pathway is protein biosynthesis; polypeptide chain elongation. Involved in peptide bond synthesis. Stimulates efficient translation and peptide-bond synthesis on native or reconstituted 70S ribosomes in vitro. Probably functions indirectly by altering the affinity of the ribosome for aminoacyl-tRNA, thus increasing their reactivity as acceptors for peptidyl transferase. The chain is Elongation factor P from Pseudomonas aeruginosa (strain LESB58).